Reading from the N-terminus, the 851-residue chain is DNA mismatch repair protein MutS (851 aa).

ATP is bound at residue 614-621 (GPNMGGKS).

Belongs to the DNA mismatch repair MutS family.

Its function is as follows. This protein is involved in the repair of mismatches in DNA. It is possible that it carries out the mismatch recognition step. This protein has a weak ATPase activity. In Yersinia pestis, this protein is DNA mismatch repair protein MutS.